The following is a 455-amino-acid chain: 1,4-beta-D-glucan cellobiohydrolase C (455 aa).

Residues 1–19 (MHYSASGLALAFLLPAIQA) form the signal peptide. Residues 20 to 55 (QQTLYGQCGGSGWTGATSCVAGAACSTLNQWYAQCL) form the CBM1 domain. Cystine bridges form between cysteine 27-cysteine 44 and cysteine 38-cysteine 54. The thr-rich linker stretch occupies residues 59-92 (TTTSTTLTTTTSSVTTTSNPGSTTTTSSVTVTAT). The segment at 66–86 (TTTTSSVTTTSNPGSTTTTSS) is disordered. The segment at 93-450 (ASGNPFSGYQ…QAYFVQLLQN (358 aa)) is catalytic. The active site involves aspartate 185. Intrachain disulfides connect cysteine 186-cysteine 245 and cysteine 377-cysteine 424. The Proton donor role is filled by aspartate 231. Aspartate 410 (nucleophile) is an active-site residue.

The protein belongs to the glycosyl hydrolase 6 (cellulase B) family.

The protein localises to the secreted. It catalyses the reaction Hydrolysis of (1-&gt;4)-beta-D-glucosidic linkages in cellulose and cellotetraose, releasing cellobiose from the non-reducing ends of the chains.. In terms of biological role, the biological conversion of cellulose to glucose generally requires three types of hydrolytic enzymes: (1) Endoglucanases which cut internal beta-1,4-glucosidic bonds; (2) Exocellobiohydrolases that cut the disaccharide cellobiose from the non-reducing end of the cellulose polymer chain; (3) Beta-1,4-glucosidases which hydrolyze the cellobiose and other short cello-oligosaccharides to glucose. Active against carboxymethylcellulose, beta-glucan and lichenan. The polypeptide is 1,4-beta-D-glucan cellobiohydrolase C (cbhC) (Emericella nidulans (strain FGSC A4 / ATCC 38163 / CBS 112.46 / NRRL 194 / M139) (Aspergillus nidulans)).